Consider the following 210-residue polypeptide: Cell division protein SepF (210 aa).

This sequence belongs to the SepF family. In terms of assembly, homodimer. Interacts with FtsZ.

It localises to the cytoplasm. Cell division protein that is part of the divisome complex and is recruited early to the Z-ring. Probably stimulates Z-ring formation, perhaps through the cross-linking of FtsZ protofilaments. Its function overlaps with FtsA. This chain is Cell division protein SepF, found in Mycobacterium leprae (strain Br4923).